The following is a 383-amino-acid chain: Probable protein phosphatase 2C 13 (383 aa).

Residues 78–349 (RSGSFADIRS…DNMTVIVICF (272 aa)) enclose the PPM-type phosphatase domain. Residues aspartate 121, glycine 122, aspartate 297, and aspartate 340 each contribute to the Mn(2+) site.

The protein belongs to the PP2C family. It depends on Mg(2+) as a cofactor. Mn(2+) is required as a cofactor.

It catalyses the reaction O-phospho-L-seryl-[protein] + H2O = L-seryl-[protein] + phosphate. It carries out the reaction O-phospho-L-threonyl-[protein] + H2O = L-threonyl-[protein] + phosphate. The protein is Probable protein phosphatase 2C 13 of Arabidopsis thaliana (Mouse-ear cress).